The following is a 622-amino-acid chain: Palmitoyltransferase ZDHHC13 (622 aa).

N-acetylmethionine is present on Met-1. At 1–291 (MEGPGLGSQC…RLWRWLQKCE (291 aa)) the chain is on the cytoplasmic side. ANK repeat units lie at residues 43–78 (PLIEDSSNCDIVKATQYGIFERCKELVEAGYDVRQP), 81–110 (ENVSLLHWAAINNRLDLVKFYISKGAVVDQ), 115–144 (LNSTPLHWAIRQGHLPMVILLLQHGADPTL), 148–177 (EGFSSIHLAVLFQHMPIIAYLISKGQSVNM), 181–211 (NGQTPLMLSAHKVIGPEPTGFLLKFNPSLNV), 216–245 (HQNTPLHWAVAAGNVNAVDKLLEAGSSLDI), and 249–277 (KGETPLDMALQNKNQLIIHMLKTEAKMRA). Residues 292–312 (LFLLLMLSVITMWAIGYILDF) traverse the membrane as a helical segment. Residues 313 to 320 (NSDSWLLK) are Lumenal-facing. Residues 321-341 (GCLLVTLFFLTSLFPRFLVGY) form a helical membrane-spanning segment. At 342 to 347 (KNLVYL) the chain is on the cytoplasmic side. Residues 348–368 (PTAFLLSSVFWIFMTWFILFF) traverse the membrane as a helical segment. Topologically, residues 369-370 (PD) are lumenal. A helical membrane pass occupies residues 371 to 391 (LAGAPFYFSFIFSIVAFLYFF). Residues 392–470 (YKTWATDPGF…RCIGFGNHHY (79 aa)) are Cytoplasmic-facing. In terms of domain architecture, DHHC spans 426-476 (TFCTSCLIRKPLRSLHCHVCNCCVARYDQHCLWTGRCIGFGNHHYYIFFLF). Cys-456 acts as the S-palmitoyl cysteine intermediate in catalysis. A helical membrane pass occupies residues 471 to 491 (YIFFLFFLSMVCGWIIYGSFI). Residues 492–518 (YLSSHCATTFKEDGLWTYLNQIVACSP) are Lumenal-facing. A helical membrane pass occupies residues 519–539 (WVLYILMLATFHFSWSTFLLL). Over 540–622 (NQLFQIAFLG…PAREKVLRSV (83 aa)) the chain is Cytoplasmic.

It belongs to the DHHC palmitoyltransferase family. AKR/ZDHHC17 subfamily. As to quaternary structure, interacts (via ANK repeats) with CLIP3. Interacts (via ANK repeats) with DNAJC5 (via C-terminus). Interacts (via ANK repeats) with HTT. Interacts (via ANK repeats) with MAP6. Interacts (via ANK repeats) with SNAP23. Interacts (via ANK repeats) with SNAP25. May interact (via ANK repeats) with SPRED2.

The protein resides in the golgi apparatus membrane. Its subcellular location is the cytoplasmic vesicle membrane. It catalyses the reaction L-cysteinyl-[protein] + hexadecanoyl-CoA = S-hexadecanoyl-L-cysteinyl-[protein] + CoA. Functionally, palmitoyltransferase that could catalyze the addition of palmitate onto various protein substrates. Palmitoyltransferase for HTT and GAD2. May play a role in Mg(2+) transport. This is Palmitoyltransferase ZDHHC13 from Homo sapiens (Human).